The primary structure comprises 203 residues: Dual-action ribosomal maturation protein DarP (203 aa).

Disordered stretches follow at residues 1–31 and 178–203; these read MTRK…SQLK and NADG…DRDA. Residues 21-31 show a composition bias toward basic and acidic residues; the sequence is GYDRPSKSQLK. Positions 188-203 are enriched in acidic residues; that stretch reads SEADDAQDDEDDDRDA.

Belongs to the DarP family.

It localises to the cytoplasm. In terms of biological role, member of a network of 50S ribosomal subunit biogenesis factors which assembles along the 30S-50S interface, preventing incorrect 23S rRNA structures from forming. Promotes peptidyl transferase center (PTC) maturation. The polypeptide is Dual-action ribosomal maturation protein DarP (Paraburkholderia xenovorans (strain LB400)).